The chain runs to 152 residues: Ribosome maturation factor RimP (152 aa).

It belongs to the RimP family.

The protein localises to the cytoplasm. In terms of biological role, required for maturation of 30S ribosomal subunits. The protein is Ribosome maturation factor RimP of Shigella boydii serotype 4 (strain Sb227).